The sequence spans 330 residues: tRNA N6-adenosine threonylcarbamoyltransferase (330 aa).

Fe cation-binding residues include H110 and H114. Residues 133–137 (MVSGG), D166, G179, D183, and N271 contribute to the substrate site. D299 contacts Fe cation.

It belongs to the KAE1 / TsaD family. It depends on Fe(2+) as a cofactor.

Its subcellular location is the cytoplasm. The catalysed reaction is L-threonylcarbamoyladenylate + adenosine(37) in tRNA = N(6)-L-threonylcarbamoyladenosine(37) in tRNA + AMP + H(+). Required for the formation of a threonylcarbamoyl group on adenosine at position 37 (t(6)A37) in tRNAs that read codons beginning with adenine. Is involved in the transfer of the threonylcarbamoyl moiety of threonylcarbamoyl-AMP (TC-AMP) to the N6 group of A37, together with TsaE and TsaB. TsaD likely plays a direct catalytic role in this reaction. The chain is tRNA N6-adenosine threonylcarbamoyltransferase from Thermosipho africanus (strain TCF52B).